The chain runs to 359 residues: MKSIGLNLSGREYKILIGSDLLSETATLLREAIPCDRVVVITNIDINRIYGKKLKKHLESKGIESLFLELPEGEIHKTLDMAAHIYPQLINHFAERNTPILALGGGVIGDLSGFVAATYQRGVPLIHLPTSLLSQVDSSIGGKVAVNHGGVKNIVGSFYQPRLVIADTGCLKTLPEKEFACGMAEIIKSAAIGSSELFRMLETNTQAVKDRSPEVMEDIISQTAAIKAGIVCQDETDRGIRNILNFGHTLGHALESTSSFSQSHGAAVAIGMCFAARLSVRLGLCENETALRLEKLIADFGLPTNPKDIDPDKIIEAMHHDKKVSDGRIRFILLKRPGEALIAENILKPDVLSVLEEMK.

NAD(+)-binding positions include 72-77 (EGEIHK), 106-110 (GVIGD), 130-131 (TS), Lys-143, Lys-152, and 170-173 (CLKT). Positions 185, 248, and 264 each coordinate Zn(2+).

The protein belongs to the sugar phosphate cyclases superfamily. Dehydroquinate synthase family. Requires Co(2+) as cofactor. It depends on Zn(2+) as a cofactor. The cofactor is NAD(+).

The protein localises to the cytoplasm. It catalyses the reaction 7-phospho-2-dehydro-3-deoxy-D-arabino-heptonate = 3-dehydroquinate + phosphate. The protein operates within metabolic intermediate biosynthesis; chorismate biosynthesis; chorismate from D-erythrose 4-phosphate and phosphoenolpyruvate: step 2/7. Functionally, catalyzes the conversion of 3-deoxy-D-arabino-heptulosonate 7-phosphate (DAHP) to dehydroquinate (DHQ). This Dehalococcoides mccartyi (strain ATCC BAA-2100 / JCM 16839 / KCTC 5957 / BAV1) protein is 3-dehydroquinate synthase.